The sequence spans 344 residues: Methionine import ATP-binding protein MetN (344 aa).

An ABC transporter domain is found at 2 to 241 (LELKQVGKVY…PQAEVTKAFV (240 aa)). Position 38–45 (38–45 (GYSGAGKS)) interacts with ATP.

This sequence belongs to the ABC transporter superfamily. Methionine importer (TC 3.A.1.24) family. The complex is composed of two ATP-binding proteins (MetN), two transmembrane proteins (MetI) and a solute-binding protein (MetQ).

The protein localises to the cell membrane. The catalysed reaction is L-methionine(out) + ATP + H2O = L-methionine(in) + ADP + phosphate + H(+). It carries out the reaction D-methionine(out) + ATP + H2O = D-methionine(in) + ADP + phosphate + H(+). Its function is as follows. Part of the ABC transporter complex MetNIQ involved in methionine import. Responsible for energy coupling to the transport system. The protein is Methionine import ATP-binding protein MetN of Latilactobacillus sakei subsp. sakei (strain 23K) (Lactobacillus sakei subsp. sakei).